A 416-amino-acid chain; its full sequence is Adenosylhomocysteinase (416 aa).

Residues Thr-55, Asp-126, and Glu-151 each coordinate substrate. Residue 152 to 154 participates in NAD(+) binding; it reads TTT. Lys-181 and Asp-185 together coordinate substrate. NAD(+)-binding positions include Asn-186, 215–220, Glu-238, Asn-273, 294–296, and Asn-341; these read GYGWVG and AGH.

The protein belongs to the adenosylhomocysteinase family. Requires NAD(+) as cofactor.

It is found in the cytoplasm. It catalyses the reaction S-adenosyl-L-homocysteine + H2O = L-homocysteine + adenosine. Its pathway is amino-acid biosynthesis; L-homocysteine biosynthesis; L-homocysteine from S-adenosyl-L-homocysteine: step 1/1. Functionally, may play a key role in the regulation of the intracellular concentration of adenosylhomocysteine. The chain is Adenosylhomocysteinase from Aeropyrum pernix (strain ATCC 700893 / DSM 11879 / JCM 9820 / NBRC 100138 / K1).